The following is a 442-amino-acid chain: Endothelin receptor type B (442 aa).

A signal peptide spans 1 to 26 (MQPPPSLCGRALVALVLACGLSRIWG). Residues 27 to 101 (EERGFPPDRA…GSIEIKETFK (75 aa)) lie on the Extracellular side of the membrane. N59 is a glycosylation site (N-linked (GlcNAc...) asparagine). A disordered region spans residues 69 to 88 (AEVPKGDRTAGSPPRTISPP). The helical transmembrane segment at 102–126 (YINTVVSCLVFVLGIIGNSTLLRII) threads the bilayer. Over 127–137 (YKNKCMRNGPN) the chain is Cytoplasmic. A helical membrane pass occupies residues 138–163 (ILIASLALGDLLHIIIDIPITVYKLL). Residues 164–175 (AEDWPFGVEMCK) are Extracellular-facing. A disulfide bridge connects residues C174 and C255. The helical transmembrane segment at 176–197 (LVPFIQKASVGITVLSLCALSI) threads the bilayer. Over 198–218 (DRYRAVASWSRIKGIGVPKWT) the chain is Cytoplasmic. A helical transmembrane segment spans residues 219-243 (AVEIVLIWVVSVVLAVPEAVGFDMI). Residues 244–271 (TIDYKGRYLRICLLHPTQKTAFMQFYKT) lie on the Extracellular side of the membrane. Residues 272 to 296 (AKDWWLFSFYFCLPLAITAFFYTLM) traverse the membrane as a helical segment. At 297-324 (TCEMLRKKSGMQIALNDHLKQRREVAKT) the chain is on the cytoplasmic side. S305 carries the post-translational modification Phosphoserine. A helical transmembrane segment spans residues 325–350 (VFCLVLVFALCWLPLHLSRILKLTIY). Over 351–362 (DQNDPNRCELLS) the chain is Extracellular. Residues 363 to 389 (FLLVLDYIGINMASLNSCINPIALYLV) traverse the membrane as a helical segment. Topologically, residues 390 to 442 (SKRFKNCFKSCLCCWCQSFEEKQSLEEKQSCLKFKANDHGYDNFRSSNKYSSS) are cytoplasmic. S-palmitoyl cysteine attachment occurs at residues C402, C403, and C405. A Phosphoserine modification is found at S419. At Y439 the chain carries Phosphotyrosine. Phosphoserine occurs at positions 440, 441, and 442.

Belongs to the G-protein coupled receptor 1 family. Endothelin receptor subfamily. EDNRB sub-subfamily.

It localises to the cell membrane. Its function is as follows. Non-specific receptor for endothelin 1, 2, and 3. Mediates its action by association with G proteins that activate a phosphatidylinositol-calcium second messenger system. This is Endothelin receptor type B (EDNRB) from Canis lupus familiaris (Dog).